A 287-amino-acid polypeptide reads, in one-letter code: Phospholipase A and acyltransferase 5 (287 aa).

2 disordered regions span residues 48-72 (PKQI…ASSQ) and 86-138 (DRGL…SNQK). Polar residues-rich tracts occupy residues 49–72 (KQIS…ASSQ) and 128–138 (LKNQAAESNQK). Positions 144–257 (LIEIFRIGYE…LRYGVPRSQQ (114 aa)) constitute an LRAT domain. Catalysis depends on residues H154 and H166. The active-site Acyl-thioester intermediate is the C241.

It belongs to the H-rev107 family. In terms of tissue distribution, expressed in testis.

The protein localises to the cytoplasm. Its subcellular location is the cytosol. It carries out the reaction a 1,2-diacyl-sn-glycero-3-phosphocholine + H2O = a 1-acyl-sn-glycero-3-phosphocholine + a fatty acid + H(+). It catalyses the reaction a 1,2-diacyl-sn-glycero-3-phosphocholine + H2O = a 2-acyl-sn-glycero-3-phosphocholine + a fatty acid + H(+). The catalysed reaction is 1-hexadecanoyl-2-(5Z,8Z,11Z,14Z-eicosatetraenoyl)-sn-glycero-3-phosphocholine + 1,2-di-(9Z-octadecenoyl)-sn-glycero-3-phosphoethanolamine = N-(5Z,8Z,11Z,14Z-eicosatetraenoyl)-1,2-di-(9Z-octadecenoyl)-sn-glycero-3-phosphoethanolamine + 1-hexadecanoyl-sn-glycero-3-phosphocholine + H(+). The enzyme catalyses 1,2-di-(9Z-octadecenoyl)-sn-glycero-3-phosphoethanolamine + 1,2-dihexadecanoyl-sn-glycero-3-phosphocholine = N-hexadecanoyl-1,2-di-(9Z-octadecenoyl)-sn-glycero-3-phosphoethanolamine + 1-hexadecanoyl-sn-glycero-3-phosphocholine + H(+). It carries out the reaction 1,2-di-(9Z-octadecenoyl)-sn-glycero-3-phosphoethanolamine + 1,2-dihexadecanoyl-sn-glycero-3-phosphocholine = N-hexadecanoyl-1,2-di-(9Z-octadecenoyl)-sn-glycero-3-phosphoethanolamine + 2-hexadecanoyl-sn-glycero-3-phosphocholine + H(+). It catalyses the reaction a 1,2-diacyl-sn-glycero-3-phosphoethanolamine + a 1,2-diacyl-sn-glycero-3-phosphocholine = an N-acyl-1,2-diacyl-sn-glycero-3-phosphoethanolamine + a 1-acyl-sn-glycero-3-phosphocholine + H(+). The catalysed reaction is a 1,2-diacyl-sn-glycero-3-phosphoethanolamine + a 1,2-diacyl-sn-glycero-3-phosphocholine = an N-acyl-1,2-diacyl-sn-glycero-3-phosphoethanolamine + a 2-acyl-sn-glycero-3-phosphocholine + H(+). The enzyme catalyses 1-hexadecanoyl-2-(9Z-octadecenoyl)-sn-glycero-3-phosphocholine + 1,2-di-(9Z-octadecenoyl)-sn-glycero-3-phosphoethanolamine = N,1,2-tri-(9Z-octadecenoyl)-sn-glycero-3-phosphoethanolamine + 1-hexadecanoyl-sn-glycero-3-phosphocholine + H(+). In terms of biological role, exhibits both phospholipase A1/2 and acyltransferase activities. Shows phospholipase A1 (PLA1) and A2 (PLA2) activity, catalyzing the calcium-independent release of fatty acids from the sn-1 or sn-2 position of glycerophospholipids. Shows N-acyltransferase activity, catalyzing the calcium-independent transfer of a fatty acyl group at the sn-1 position of phosphatidylcholine (PC) and other glycerophospholipids to the primary amine of phosphatidylethanolamine (PE), forming N-acylphosphatidylethanolamine (NAPE), which serves as precursor for N-acylethanolamines (NAEs). This chain is Phospholipase A and acyltransferase 5, found in Rattus norvegicus (Rat).